We begin with the raw amino-acid sequence, 235 residues long: Phosphoribosylaminoimidazole-succinocarboxamide synthase (235 aa).

The protein belongs to the SAICAR synthetase family.

It catalyses the reaction 5-amino-1-(5-phospho-D-ribosyl)imidazole-4-carboxylate + L-aspartate + ATP = (2S)-2-[5-amino-1-(5-phospho-beta-D-ribosyl)imidazole-4-carboxamido]succinate + ADP + phosphate + 2 H(+). It participates in purine metabolism; IMP biosynthesis via de novo pathway; 5-amino-1-(5-phospho-D-ribosyl)imidazole-4-carboxamide from 5-amino-1-(5-phospho-D-ribosyl)imidazole-4-carboxylate: step 1/2. This is Phosphoribosylaminoimidazole-succinocarboxamide synthase from Nautilia profundicola (strain ATCC BAA-1463 / DSM 18972 / AmH).